The sequence spans 679 residues: UvrABC system protein C (679 aa).

One can recognise a GIY-YIG domain in the interval 65 to 143 (NSPGVYRMLN…IKRLRPRFNV (79 aa)). One can recognise a UVR domain in the interval 253–288 (QKVKSHMAEAMNQAAEDLDFERAAIYRDRLAALSHV).

Belongs to the UvrC family. Interacts with UvrB in an incision complex.

The protein resides in the cytoplasm. Its function is as follows. The UvrABC repair system catalyzes the recognition and processing of DNA lesions. UvrC both incises the 5' and 3' sides of the lesion. The N-terminal half is responsible for the 3' incision and the C-terminal half is responsible for the 5' incision. This is UvrABC system protein C from Rhizobium etli (strain ATCC 51251 / DSM 11541 / JCM 21823 / NBRC 15573 / CFN 42).